The primary structure comprises 861 residues: DNA mismatch repair protein MutS (861 aa).

616-623 (GPNMGGKS) serves as a coordination point for ATP.

The protein belongs to the DNA mismatch repair MutS family.

Its function is as follows. This protein is involved in the repair of mismatches in DNA. It is possible that it carries out the mismatch recognition step. This protein has a weak ATPase activity. This Haemophilus influenzae (strain 86-028NP) protein is DNA mismatch repair protein MutS.